The sequence spans 433 residues: Shufflon protein C' (433 aa).

The interval 1-361 (MKKYDRGWAS…TGAILSCQSG (361 aa)) is constant region. The tract at residues 362–433 (RWSGGNKINY…HVDAYCCPFN (72 aa)) is variable region.

The protein is Shufflon protein C' of Escherichia coli.